The chain runs to 152 residues: Large ribosomal subunit protein bL9 (152 aa).

This sequence belongs to the bacterial ribosomal protein bL9 family.

Its function is as follows. Binds to the 23S rRNA. In Synechococcus sp. (strain RCC307), this protein is Large ribosomal subunit protein bL9.